The following is a 547-amino-acid chain: Nitrosoguanidine resistance protein SNG1 (547 aa).

A disordered region spans residues 35 to 86; sequence NQRFAEGSGHSSDLAKSLEDYRPPDEKPSSLSSVGEGGANEEEKGGNDGGPL. A compositionally biased stretch (basic and acidic residues) spans 50–62; it reads KSLEDYRPPDEKP. At threonine 91 the chain carries Phosphothreonine. Transmembrane regions (helical) follow at residues 109-129, 159-179, 318-338, 363-383, 394-414, 418-438, 457-477, and 488-508; these read FVLN…IYWG, ISAI…IYNA, ILMA…VLQL, LISW…SAIF, GGFV…GGAN, LSLV…TWII, YGYI…FLNL, and ILVA…KFAG. Residues 526–536 show a composition bias toward low complexity; sequence ATQRASRPAEA. The disordered stretch occupies residues 526–547; it reads ATQRASRPAEANTDKNNNPPGN.

This sequence to yeast YJR015W.

It is found in the membrane. Its function is as follows. May function as a N-methyl-N'nitro-N-nitrosoguanidine (MNNG) export permease. The polypeptide is Nitrosoguanidine resistance protein SNG1 (SNG1) (Saccharomyces cerevisiae (strain ATCC 204508 / S288c) (Baker's yeast)).